The sequence spans 344 residues: MTNFYKVFLAVFILVCCNISQAAVSFIGSTENDVGPSLGSYSRTHAMDNLPFVYDTRNKIGYQNANVWHISKGFCVGLDGKVDLPVVGSLDGQSIYGLTEEVGLLIWMGDTKYSRGTAMSGNSWENVFSGWCVGANTASTQGLSVRVTPVILKRNSSARYSVQKTSIGSIRMRPYNGSSAGSVQTTVNFSLNPFTLNDTVTSCRLLTPSAVNVSLAAISAGQLPSSGDEVVAGTTSLKLQCDAGVTVWATLTDATTPSNRSDILTLTGASTATGVGLRIYKNTDSTPLKFGPDSPVKGNENQWQLSTGTETSPSVRLYVKYVNTGEGINPGTVNGISTFTFSYQ.

The N-terminal stretch at 1 to 22 (MTNFYKVFLAVFILVCCNISQA) is a signal peptide. Positions 23–199 (AVSFIGSTEN…SLNPFTLNDT (177 aa)) are receptor-binding lectin domain. A carbohydrate-binding positions include 65-66 (AN), 110-111 (DT), and 139-142 (STQG). The cysteines at positions 75 and 132 are disulfide-linked. The fimbrillin-binding domain stretch occupies residues 200 to 344 (VTSCRLLTPS…GISTFTFSYQ (145 aa)). Residues 288–308 (LKFGPDSPVKGNENQWQLSTG) form a disordered region. The span at 299–308 (NENQWQLSTG) shows a compositional bias: polar residues.

It belongs to the fimbrial protein family.

The protein localises to the fimbrium. In terms of biological role, essential fimbrial adhesion factor that mediates binding to N-acetylglucosamine-containing receptors in the host intestinal microvilli, leading to colonization of the intestinal tissue, and diarrhea or septicemia. Also confers adhesiveness to laminin and basement membranes. The polypeptide is F17a-G fimbrial adhesin (f17aG) (Escherichia coli).